The sequence spans 621 residues: Intermediate filament protein ifc-2 (621 aa).

Residues 20-55 (SGAYTSGFGGLVSGMSSAGAICTTQIRDAREREKRE) are head. An IF rod domain is found at 52-400 (EKREIGLLND…VLLNGANVTT (349 aa)). Positions 56–87 (IGLLNDRLADYIEKVRFLEAQNQCLSHDIDIL) are coil 1A. Positions 88–100 (RRGFSGGGHVSGL) are linker 1. Residues 101–238 (YDTEIAQAKR…TENSTRIEQE (138 aa)) form a coil 1B region. The interval 239-256 (LVFIRRDTTAENRDYFRH) is linker 12. The tract at residues 257-400 (ELQAAIRDIR…VLLNGANVTT (144 aa)) is coil 2. Residues 401–549 (YVSNTHPSGV…RVDVGGFRVE (149 aa)) are tail. Positions 508 to 621 (SGRSFHSWYL…EERAWFVYLN (114 aa)) constitute an LTD domain.

This sequence belongs to the intermediate filament family.

It is found in the cytoplasm. Cytoplasmic intermediate filaments provide mechanical strength to cells. This is Intermediate filament protein ifc-2 from Caenorhabditis briggsae.